Reading from the N-terminus, the 131-residue chain is MRHRHSGRQLNRNSSHRKAMFRNMVSSLVEHELIKTTLPKAKELRRYAEPLITLSKVDSVANRRLAFDRLRNKSTVGKLFNELGPRYEGRPGGYLRILKCGFRAGDKAPMAYVELVGRPEPVAEADVSAED.

This sequence belongs to the bacterial ribosomal protein bL17 family. As to quaternary structure, part of the 50S ribosomal subunit. Contacts protein L32.

This Teredinibacter turnerae (strain ATCC 39867 / T7901) protein is Large ribosomal subunit protein bL17.